The sequence spans 538 residues: MWSGRSSFTSLVVGVFVVYVVHTCWVMYGIVYTRPCSGHGRCIQPYLAQRPKLQLSVYTTTRSNLGSENNVDLVLNVEDFDVESKFERTVNVSVPKKTRNNGTLYAYVFLHHAGVLPWNDAKQVHLVSPLTTYMVPRPEEVSLLAGGPAAQQIEAEKRPTSALDEPVSHWRPRLTLNVMVDNFVFDGASLPADVQRYMKMIQLGKTVQYLPILFIDQLSNRVKDLMVINRSSTELPLTVSYDKISLGRLRFWIHMQDAVYSLQQFGFSEKDADEVKGIFVDTNLYFLALTFFVAAFHLLFDFLAFKNDISFWKKKKSMIGMSTKAVLWRCFSTVVIFLFLLDEQTSLPVLVPAGIGAAIELWKVKKALKMTVIWRGLWPTFQFGTYSESERRTEEYDAQAMKYLSYLLYPLCIGGAIYSLLNIKYKSWYSWLINSFVNGVYAFGFLFMLPQLFVNYKMKSVAHLPWKAFTYKAFNTFIDDVFAFIITMPTSHRLACFRDDVVFLVYLYQRWLYPVDKSRVNEFGESYEDTPQRKPHTD.

Residues 1–10 (MWSGRSSFTS) are Cytoplasmic-facing. The helical transmembrane segment at 11-31 (LVVGVFVVYVVHTCWVMYGIV) threads the bilayer. The Extracellular portion of the chain corresponds to 32–284 (YTRPCSGHGR…VKGIFVDTNL (253 aa)). Asparagine 91 and asparagine 101 each carry an N-linked (GlcNAc...) asparagine glycan. A helical membrane pass occupies residues 285–305 (YFLALTFFVAAFHLLFDFLAF). At 306-324 (KNDISFWKKKKSMIGMSTK) the chain is on the cytoplasmic side. A helical membrane pass occupies residues 325 to 341 (AVLWRCFSTVVIFLFLL). At 342–402 (DEQTSLPVLV…TEEYDAQAMK (61 aa)) the chain is on the extracellular side. The helical transmembrane segment at 403–423 (YLSYLLYPLCIGGAIYSLLNI) threads the bilayer. Residues 424–428 (KYKSW) are Cytoplasmic-facing. The helical transmembrane segment at 429 to 449 (YSWLINSFVNGVYAFGFLFML) threads the bilayer. Topologically, residues 450 to 538 (PQLFVNYKMK…DTPQRKPHTD (89 aa)) are extracellular.

It belongs to the CLPTM1 family.

The protein localises to the endoplasmic reticulum membrane. It catalyses the reaction a 6-(alpha-D-glucosaminyl)-1-(1,2-diacyl-sn-glycero-3-phospho)-1D-myo-inositol(in) = a 6-(alpha-D-glucosaminyl)-1-(1,2-diacyl-sn-glycero-3-phospho)-1D-myo-inositol(out). The enzyme catalyses 6-(alpha-D-glucosaminyl)-(1-octadecanoyl,2-(9Z)-octadecenoyl-sn-glycero-3-phospho)-1D-myo-inositol(in) = 6-(alpha-D-glucosaminyl)-(1-octadecanoyl,2-(9Z)-octadecenoyl-sn-glycero-3-phospho)-1D-myo-inositol(out). The catalysed reaction is a 1,2-diacyl-sn-glycero-3-phospho-(1D-myo-inositol)(in) = a 1,2-diacyl-sn-glycero-3-phospho-(1D-myo-inositol)(out). It carries out the reaction a 1,2-diacyl-sn-glycero-3-phosphocholine(in) = a 1,2-diacyl-sn-glycero-3-phosphocholine(out). It catalyses the reaction a 1,2-diacyl-sn-glycero-3-phosphoethanolamine(in) = a 1,2-diacyl-sn-glycero-3-phosphoethanolamine(out). Scramblase that mediates the translocation of glucosaminylphosphatidylinositol (alpha-D-GlcN-(1-6)-(1,2-diacyl-sn-glycero-3-phospho)-1D-myo-inositol, GlcN-PI) across the endoplasmic reticulum (ER) membrane, from the cytosolic leaflet to the luminal leaflet of the ER membrane, where it participates in the biosynthesis of glycosylphosphatidylinositol (GPI). GPI is a lipid glycoconjugate involved in post-translational modification of proteins. Can also translocate 1,2-diacyl-sn-glycero-3-phospho-(1D-myo-inositol) (phosphatidylinositol or PI), as well as several other phospholipids (1,2-diacyl-sn-glycero-3-phosphocholine, 1,2-diacyl-sn-glycero-3-phosphoethanolamine), and N-acetylglucosaminylphosphatidylinositol (GlcNAc-PI) in vitro. The chain is Lipid scramblase CLPTM1L (CLPTM1L) from Bos taurus (Bovine).